Here is a 351-residue protein sequence, read N- to C-terminus: Methylthioribose-1-phosphate isomerase (351 aa).

Substrate contacts are provided by residues 55-57 (RGA), R95, and Q202. D243 functions as the Proton donor in the catalytic mechanism. 253-254 (NK) contributes to the substrate binding site.

Belongs to the eIF-2B alpha/beta/delta subunits family. MtnA subfamily.

The enzyme catalyses 5-(methylsulfanyl)-alpha-D-ribose 1-phosphate = 5-(methylsulfanyl)-D-ribulose 1-phosphate. It participates in amino-acid biosynthesis; L-methionine biosynthesis via salvage pathway; L-methionine from S-methyl-5-thio-alpha-D-ribose 1-phosphate: step 1/6. Its function is as follows. Catalyzes the interconversion of methylthioribose-1-phosphate (MTR-1-P) into methylthioribulose-1-phosphate (MTRu-1-P). The chain is Methylthioribose-1-phosphate isomerase from Marinobacter nauticus (strain ATCC 700491 / DSM 11845 / VT8) (Marinobacter aquaeolei).